We begin with the raw amino-acid sequence, 139 residues long: D-ribose pyranase (139 aa).

The Proton donor role is filled by histidine 20. Residues aspartate 28, histidine 106, and tyrosine 128 to asparagine 130 each bind substrate.

It belongs to the RbsD / FucU family. RbsD subfamily. As to quaternary structure, homodecamer.

The protein localises to the cytoplasm. It catalyses the reaction beta-D-ribopyranose = beta-D-ribofuranose. It participates in carbohydrate metabolism; D-ribose degradation; D-ribose 5-phosphate from beta-D-ribopyranose: step 1/2. Its function is as follows. Catalyzes the interconversion of beta-pyran and beta-furan forms of D-ribose. This Vibrio vulnificus (strain CMCP6) protein is D-ribose pyranase.